Reading from the N-terminus, the 222-residue chain is Ribose-5-phosphate isomerase A (222 aa).

Residues 29–32, 82–85, and 95–98 each bind substrate; these read TGST, DSAD, and KGGG. Residue Glu104 is the Proton acceptor of the active site. Lys122 contributes to the substrate binding site.

This sequence belongs to the ribose 5-phosphate isomerase family. In terms of assembly, homodimer.

The catalysed reaction is aldehydo-D-ribose 5-phosphate = D-ribulose 5-phosphate. The protein operates within carbohydrate degradation; pentose phosphate pathway; D-ribose 5-phosphate from D-ribulose 5-phosphate (non-oxidative stage): step 1/1. Its function is as follows. Catalyzes the reversible conversion of ribose-5-phosphate to ribulose 5-phosphate. The chain is Ribose-5-phosphate isomerase A from Blochmanniella floridana.